The primary structure comprises 259 residues: DNA-directed RNA polymerase 30 kDa polypeptide (259 aa).

The segment at 155–195 adopts a TFIIS-type zinc-finger fold; sequence YNTPCPNCKSRNTTPMMIQTRAADEPPLVRHACRDCKQHFK. Positions 159, 162, 187, and 190 each coordinate Zn(2+). The tract at residues 220-259 is disordered; that stretch reads EILPDNNPSPPESPEPASPIDDGLIRATFDRNDEPPEDDE. Residues 226–236 show a composition bias toward pro residues; the sequence is NPSPPESPEPA.

It belongs to the poxviridae DNA-directed RNA polymerase 30 kDa subunit family. In terms of assembly, the DNA-dependent RNA polymerase (vRNAP) consists of eight subunits encoded by early viral genes and termed according to their apparent molecular masses Rpo147, Rpo132, Rpo35, Rpo30, Rpo22, Rpo19, Rpo18, and Rpo7. The same holoenzyme, with the addition of the transcription-specificity factor RAP94, is used for early gene expression.

It localises to the virion. The protein localises to the host cytoplasm. It catalyses the reaction RNA(n) + a ribonucleoside 5'-triphosphate = RNA(n+1) + diphosphate. Functionally, part of the DNA-dependent RNA polymerase which catalyzes the transcription of viral DNA into RNA using the four ribonucleoside triphosphates as substrates. Responsible for the transcription of early, intermediate and late genes. DNA-dependent RNA polymerase associates with the early transcription factor (ETF), itself composed of OPG118 and OPG134, thereby allowing the early genes transcription. Late transcription, and probably also intermediate transcription, require newly synthesized RNA polymerase. This is DNA-directed RNA polymerase 30 kDa polypeptide (OPG066) from Monkeypox virus.